A 205-amino-acid polypeptide reads, in one-letter code: SREBP regulating gene protein (205 aa).

Over 1 to 16 the chain is Cytoplasmic; sequence MVPCGAVLWRRLLRKR. A helical membrane pass occupies residues 17–35; that stretch reads WVLGVVFGLSLVYFLSSTF. At 36 to 205 the chain is on the lumenal side; sequence KQEERTVRDR…GEYPPELLPV (170 aa). An N-linked (GlcNAc...) asparagine glycan is attached at Asn-67.

This sequence belongs to the SPRING family.

The protein localises to the golgi apparatus membrane. Positively regulates hepatic SREBP signaling pathway by modulating the proper localization of SCAP (SREBP cleavage-activating protein) to the endoplasmic reticulum, thereby controlling the level of functional SCAP. This chain is SREBP regulating gene protein, found in Gallus gallus (Chicken).